A 707-amino-acid chain; its full sequence is Anaerobic ribonucleoside-triphosphate reductase (707 aa).

One can recognise an ATP-cone domain in the interval 4–95; that stretch reads FGVIKRDGSR…EYRHDRDLAR (92 aa). A Glycine radical domain is found at 584–707; that stretch reads KKVNPYDKLD…EEVKRRVKHL (124 aa). 4 residues coordinate Zn(2+): cysteine 645, cysteine 648, cysteine 663, and cysteine 666. Glycine 682 carries the glycine radical modification.

The protein belongs to the anaerobic ribonucleoside-triphosphate reductase family. As to quaternary structure, forms a tetramer composed of two NrdD and two NrdG subunits.

It catalyses the reaction a ribonucleoside 5'-triphosphate + formate + H(+) = a 2'-deoxyribonucleoside 5'-triphosphate + CO2 + H2O. Its activity is regulated as follows. Activated under anaerobic conditions by NrdG, a tightly associated activase. Activation involves the formation of a glycyl radical at Gly-682. Functionally, catalyzes the conversion of ribonucleotides into deoxyribonucleotides, which are required for DNA synthesis and repair. The sequence is that of Anaerobic ribonucleoside-triphosphate reductase (nrdD) from Haemophilus influenzae (strain ATCC 51907 / DSM 11121 / KW20 / Rd).